Reading from the N-terminus, the 335-residue chain is Coiled-coil domain-containing protein 68 (335 aa).

Residues 101–305 (QLLEMNKENE…KTQVALSSET (205 aa)) adopt a coiled-coil conformation.

Interacts with CEP170. In terms of tissue distribution, expressed in bone marrow, colon, small intestine, spleen, testis, trachea and cutaneous T-cell lymphoma (CTCL).

It is found in the cytoplasm. The protein resides in the cytoskeleton. It localises to the microtubule organizing center. The protein localises to the centrosome. Its subcellular location is the centriole. Centriolar protein required for centriole subdistal appendage assembly and microtubule anchoring in interphase cells. Together with CCDC120, cooperate with subdistal appendage components ODF2, NIN and CEP170 for hierarchical subdistal appendage assembly. This Homo sapiens (Human) protein is Coiled-coil domain-containing protein 68 (CCDC68).